A 37-amino-acid chain; its full sequence is Large ribosomal subunit protein bL36A (37 aa).

It belongs to the bacterial ribosomal protein bL36 family.

In Methylobacillus flagellatus (strain ATCC 51484 / DSM 6875 / VKM B-1610 / KT), this protein is Large ribosomal subunit protein bL36A.